The primary structure comprises 145 residues: uncharacterized protein (145 aa).

This is an uncharacterized protein from Frog virus 3 (isolate Goorha) (FV-3).